The chain runs to 239 residues: Orotidine 5'-phosphate decarboxylase (239 aa).

Substrate-binding positions include Asp15, Lys37, 64 to 73 (DLKYHDIPNT), Thr126, Arg187, Gln196, Gly216, and Arg217. Lys66 (proton donor) is an active-site residue.

Belongs to the OMP decarboxylase family. Type 1 subfamily. In terms of assembly, homodimer.

It carries out the reaction orotidine 5'-phosphate + H(+) = UMP + CO2. Its pathway is pyrimidine metabolism; UMP biosynthesis via de novo pathway; UMP from orotate: step 2/2. In terms of biological role, catalyzes the decarboxylation of orotidine 5'-monophosphate (OMP) to uridine 5'-monophosphate (UMP). The sequence is that of Orotidine 5'-phosphate decarboxylase from Geotalea daltonii (strain DSM 22248 / JCM 15807 / FRC-32) (Geobacter daltonii).